The chain runs to 109 residues: Large ribosomal subunit protein uL24 (109 aa).

Belongs to the universal ribosomal protein uL24 family. Part of the 50S ribosomal subunit.

In terms of biological role, one of two assembly initiator proteins, it binds directly to the 5'-end of the 23S rRNA, where it nucleates assembly of the 50S subunit. Functionally, one of the proteins that surrounds the polypeptide exit tunnel on the outside of the subunit. This chain is Large ribosomal subunit protein uL24, found in Ehrlichia ruminantium (strain Gardel).